We begin with the raw amino-acid sequence, 214 residues long: Potassium-transporting ATPase KdpC subunit (214 aa).

The chain crosses the membrane as a helical span at residues 17 to 37 (LWVITALIYPFSMIAIGQILF).

This sequence belongs to the KdpC family. As to quaternary structure, the system is composed of three essential subunits: KdpA, KdpB and KdpC.

The protein resides in the cell inner membrane. Functionally, part of the high-affinity ATP-driven potassium transport (or Kdp) system, which catalyzes the hydrolysis of ATP coupled with the electrogenic transport of potassium into the cytoplasm. This subunit acts as a catalytic chaperone that increases the ATP-binding affinity of the ATP-hydrolyzing subunit KdpB by the formation of a transient KdpB/KdpC/ATP ternary complex. The chain is Potassium-transporting ATPase KdpC subunit from Microcystis aeruginosa (strain NIES-843 / IAM M-2473).